Here is a 547-residue protein sequence, read N- to C-terminus: Probable protein kinase UbiB (547 aa).

In terms of domain architecture, Protein kinase spans 121 to 501 (EFSPDPMASA…QLRSERRWRR (381 aa)). ATP-binding positions include 127 to 135 (MASASVAQV) and Lys-149. Asp-284 (proton acceptor) is an active-site residue. The next 2 membrane-spanning stretches (helical) occupy residues 502–522 (GFIA…HAGQ) and 523–543 (WLAD…GVML).

This sequence belongs to the ABC1 family. UbiB subfamily.

It localises to the cell inner membrane. It participates in cofactor biosynthesis; ubiquinone biosynthesis [regulation]. Functionally, is probably a protein kinase regulator of UbiI activity which is involved in aerobic coenzyme Q (ubiquinone) biosynthesis. This chain is Probable protein kinase UbiB, found in Marinobacter nauticus (strain ATCC 700491 / DSM 11845 / VT8) (Marinobacter aquaeolei).